We begin with the raw amino-acid sequence, 166 residues long: Nucleotide-binding protein Dred_1927 (166 aa).

It belongs to the YajQ family.

In terms of biological role, nucleotide-binding protein. The chain is Nucleotide-binding protein Dred_1927 from Desulforamulus reducens (strain ATCC BAA-1160 / DSM 100696 / MI-1) (Desulfotomaculum reducens).